The primary structure comprises 475 residues: Ankyrin repeat, SAM and basic leucine zipper domain-containing protein 1 (475 aa).

Residues 1-25 (MAAGTLRGLAVAGGGESSDSEDDGW) are disordered. Residues serine 17, serine 18, and serine 20 each carry the phosphoserine modification. 6 ANK repeats span residues 45-74 (EKNE…NVDS), 78-107 (YGWT…NASF), 110-144 (DKLT…DPNT), 148-177 (RLMT…EVNA), 181-210 (NGYT…NKML), and 214-243 (DGRT…PLEG). The 63-residue stretch at 272 to 334 (PYTAFGDLEI…KILAALKELE (63 aa)) folds into the SAM domain.

As to quaternary structure, interacts with DDX4, PIWIL1, RANBP9 and TDRD1. As to expression, expressed exclusively in testis and ovary with higher levels in testis.

The protein localises to the cytoplasm. Its function is as follows. Plays a central role during spermatogenesis by repressing transposable elements and preventing their mobilization, which is essential for the germline integrity. Acts via the piRNA metabolic process, which mediates the repression of transposable elements during meiosis by forming complexes composed of piRNAs and Piwi proteins and governs the methylation and subsequent repression of transposons. Its association with pi-bodies suggests a participation in the primary piRNAs metabolic process. Required prior to the pachytene stage to facilitate the production of multiple types of piRNAs, including those associated with repeats involved in regulation of retrotransposons. May act by mediating protein-protein interactions during germ cell maturation. The protein is Ankyrin repeat, SAM and basic leucine zipper domain-containing protein 1 of Mus musculus (Mouse).